The primary structure comprises 58 residues: Birtoxin (58 aa).

Residues 3-58 (VPGNYPLDKDGNTYKCFLLGGNEECLNVCKLHGVQYGYCYASKCWCEYLEDDKDSV) form the LCN-type CS-alpha/beta domain. Disulfide bonds link Cys-18–Cys-41, Cys-27–Cys-46, and Cys-31–Cys-48.

As to expression, expressed by the venom gland.

It is found in the secreted. Functionally, beta toxins bind voltage-independently at site-4 of sodium channels (Nav) and shift the voltage of activation toward more negative potentials thereby affecting sodium channel activation and promoting spontaneous and repetitive firing. Moderately toxic, but very high abundant. Does not target reptilian channels. Does not produce effect when administered to blowfly and cabbage looper larvae. In mice, produces convulsions, tremors, increased ventilation and, subsequently, death. This Parabuthus transvaalicus (Transvaal thick-tailed scorpion) protein is Birtoxin.